The sequence spans 134 residues: MLWQAYVDDHLMCDIEGHEGHRLTAAAIVGHDGSVWAQSATFPQFKPEEMNGVMTDFNEPGHLAPTGLHLGGTKYMVIQGEAGAVIRGKKGSGGITIKKTGQALVFGIYEEPVTPGQCNMVVERLGDYLLEQGL.

Cys13 and Cys118 are oxidised to a cystine. The short motif at 84–100 (AVIRGKKGSGGITIKKT) is the Involved in PIP2 interaction element. Thr114 bears the Phosphothreonine mark.

It belongs to the profilin family. In terms of assembly, occurs in many kinds of cells as a complex with monomeric actin in a 1:1 ratio. Phosphorylated by MAP kinases.

Its subcellular location is the cytoplasm. It localises to the cytoskeleton. Binds to actin and affects the structure of the cytoskeleton. At high concentrations, profilin prevents the polymerization of actin, whereas it enhances it at low concentrations. The sequence is that of Profilin-2 from Olea europaea (Common olive).